A 241-amino-acid polypeptide reads, in one-letter code: Triosephosphate isomerase (241 aa).

Substrate is bound at residue 9–11; it reads NWK. Histidine 96 acts as the Electrophile in catalysis. Glutamate 165 serves as the catalytic Proton acceptor. Substrate contacts are provided by residues glycine 171, serine 204, and 225–226; that span reads GG.

The protein belongs to the triosephosphate isomerase family. In terms of assembly, homodimer.

It is found in the cytoplasm. It carries out the reaction D-glyceraldehyde 3-phosphate = dihydroxyacetone phosphate. It functions in the pathway carbohydrate biosynthesis; gluconeogenesis. The protein operates within carbohydrate degradation; glycolysis; D-glyceraldehyde 3-phosphate from glycerone phosphate: step 1/1. Functionally, involved in the gluconeogenesis. Catalyzes stereospecifically the conversion of dihydroxyacetone phosphate (DHAP) to D-glyceraldehyde-3-phosphate (G3P). The chain is Triosephosphate isomerase from Prochlorococcus marinus subsp. pastoris (strain CCMP1986 / NIES-2087 / MED4).